Here is a 515-residue protein sequence, read N- to C-terminus: Lysosomal acid glucosylceramidase (515 aa).

The signal sequence occupies residues 1 to 19; that stretch reads MAARLIGFFLFQAVSWAYG. Cystine bridges form between Cys-23–Cys-35 and Cys-37–Cys-42. 2 N-linked (GlcNAc...) asparagine glycosylation sites follow: Asn-38 and Asn-78. Asn-165 is a glycosylation site (N-linked (GlcNAc...) (high mannose) asparagine). Glu-254 (proton donor) is an active-site residue. The N-linked (GlcNAc...) asparagine glycan is linked to Asn-289. The Nucleophile role is filled by Glu-358. N-linked (GlcNAc...) asparagine glycosylation is present at Asn-480.

Belongs to the glycosyl hydrolase 30 family. In terms of assembly, interacts with saposin-C. Interacts with SCARB2. Interacts with TCP1. Interacts with GRN; this interaction prevents aggregation of GBA1-SCARB2 complex via interaction with HSPA1A upon stress.

The protein resides in the lysosome membrane. The catalysed reaction is a beta-D-glucosyl-(1&lt;-&gt;1')-N-acylsphing-4-enine + H2O = an N-acylsphing-4-enine + D-glucose. The enzyme catalyses a beta-D-galactosyl-(1&lt;-&gt;1')-N-acylsphing-4-enine + H2O = an N-acylsphing-4-enine + D-galactose. It catalyses the reaction cholesteryl 3-beta-D-glucoside + H2O = cholesterol + D-glucose. It carries out the reaction a beta-D-glucosyl-(1&lt;-&gt;1')-N-acylsphing-4-enine + cholesterol = cholesteryl 3-beta-D-glucoside + an N-acylsphing-4-enine. The catalysed reaction is beta-D-glucosyl-(1&lt;-&gt;1')-N-hexadecanoylsphing-4-enine + cholesterol = cholesteryl 3-beta-D-glucoside + N-hexadecanoylsphing-4-enine. The enzyme catalyses beta-D-glucosyl-N-(9Z-octadecenoyl)-sphing-4E-enine + cholesterol = N-(9Z-octadecenoyl)-sphing-4-enine + cholesteryl 3-beta-D-glucoside. It catalyses the reaction beta-D-glucosyl-N-octanoylsphing-4E-enine + cholesterol = N-octanoylsphing-4-enine + cholesteryl 3-beta-D-glucoside. It carries out the reaction beta-D-glucosyl-N-dodecanoylsphing-4-enine + cholesterol = N-dodecanoylsphing-4-enine + cholesteryl 3-beta-D-glucoside. The catalysed reaction is beta-D-glucosyl-(1&lt;-&gt;1)-N-octadecanoylsphing-4-enine + cholesterol = N-octadecanoylsphing-4-enine + cholesteryl 3-beta-D-glucoside. The enzyme catalyses beta-D-glucosyl-(1&lt;-&gt;1')-N-(15Z-tetracosenoyl)-sphing-4-enine + cholesterol = N-(15Z-tetracosenoyl)-sphing-4-enine + cholesteryl 3-beta-D-glucoside. It catalyses the reaction a beta-D-galactosyl-(1&lt;-&gt;1')-N-acylsphing-4-enine + cholesterol = cholesteryl 3-beta-D-galactoside + an N-acylsphing-4-enine. It carries out the reaction 1-(beta-D-galactosyl)-N-dodecanoylsphing-4-enine + cholesterol = cholesteryl 3-beta-D-galactoside + N-dodecanoylsphing-4-enine. The catalysed reaction is a beta-D-xylosyl-(1&lt;-&gt;1')-N-acylsphing-4-enine + cholesterol = cholesteryl 3-beta-D-xyloside + an N-acylsphing-4-enine. The enzyme catalyses beta-D-xylosyl-(1&lt;-&gt;1')-N-(9Z-octadecenoyl)-sphing-4-enine + cholesterol = cholesteryl 3-beta-D-xyloside + N-(9Z-octadecenoyl)-sphing-4-enine. The protein operates within steroid metabolism; cholesterol metabolism. It functions in the pathway sphingolipid metabolism. Inhibited by conduritol B epoxide/CBE. In terms of biological role, glucosylceramidase that catalyzes, within the lysosomal compartment, the hydrolysis of glucosylceramides/GlcCers (such as beta-D-glucosyl-(1&lt;-&gt;1')-N-acylsphing-4-enine) into free ceramides (such as N-acylsphing-4-enine) and glucose. Plays a central role in the degradation of complex lipids and the turnover of cellular membranes. Through the production of ceramides, participates in the PKC-activated salvage pathway of ceramide formation. Catalyzes the glucosylation of cholesterol, through a transglucosylation reaction where glucose is transferred from GlcCer to cholesterol. GlcCer containing mono-unsaturated fatty acids (such as beta-D-glucosyl-N-(9Z-octadecenoyl)-sphing-4-enine) are preferred as glucose donors for cholesterol glucosylation when compared with GlcCer containing same chain length of saturated fatty acids (such as beta-D-glucosyl-N-octadecanoyl-sphing-4-enine). Under specific conditions, may alternatively catalyze the reverse reaction, transferring glucose from cholesteryl 3-beta-D-glucoside to ceramide. Can also hydrolyze cholesteryl 3-beta-D-glucoside producing glucose and cholesterol. Catalyzes the hydrolysis of galactosylceramides/GalCers (such as beta-D-galactosyl-(1&lt;-&gt;1')-N-acylsphing-4-enine), as well as the transfer of galactose between GalCers and cholesterol in vitro, but with lower activity than with GlcCers. Contrary to GlcCer and GalCer, xylosylceramide/XylCer (such as beta-D-xyosyl-(1&lt;-&gt;1')-N-acylsphing-4-enine) is not a good substrate for hydrolysis, however it is a good xylose donor for transxylosylation activity to form cholesteryl 3-beta-D-xyloside. The sequence is that of Lysosomal acid glucosylceramidase (Gba1) from Mus musculus (Mouse).